The following is a 470-amino-acid chain: Cysteine--tRNA ligase (470 aa).

C27 is a Zn(2+) binding site. Positions 29-39 (PTVYNYIHIGN) match the 'HIGH' region motif. Residues C207, H232, and E236 each contribute to the Zn(2+) site. Positions 264–268 (KMSKS) match the 'KMSKS' region motif. K267 contacts ATP.

This sequence belongs to the class-I aminoacyl-tRNA synthetase family. In terms of assembly, monomer. Zn(2+) is required as a cofactor.

The protein localises to the cytoplasm. The catalysed reaction is tRNA(Cys) + L-cysteine + ATP = L-cysteinyl-tRNA(Cys) + AMP + diphosphate. This is Cysteine--tRNA ligase from Lachnoclostridium phytofermentans (strain ATCC 700394 / DSM 18823 / ISDg) (Clostridium phytofermentans).